Reading from the N-terminus, the 374-residue chain is Chaperone protein DnaJ (374 aa).

The J domain occupies 4-69 (SYYEILEITQ…EKRAIYDRYG (66 aa)). A CR-type zinc finger spans residues 136–213 (GCKKNIDFTY…CKGLGYNESK (78 aa)). Zn(2+) contacts are provided by cysteine 149, cysteine 152, cysteine 165, cysteine 168, cysteine 187, cysteine 190, cysteine 201, and cysteine 204. CXXCXGXG motif repeat units follow at residues 149-156 (CKTCNGTG), 165-172 (CPKCQGRG), 187-194 (CPDCQGSG), and 201-208 (CSDCKGLG).

It belongs to the DnaJ family. As to quaternary structure, homodimer. Requires Zn(2+) as cofactor.

It is found in the cytoplasm. In terms of biological role, participates actively in the response to hyperosmotic and heat shock by preventing the aggregation of stress-denatured proteins and by disaggregating proteins, also in an autonomous, DnaK-independent fashion. Unfolded proteins bind initially to DnaJ; upon interaction with the DnaJ-bound protein, DnaK hydrolyzes its bound ATP, resulting in the formation of a stable complex. GrpE releases ADP from DnaK; ATP binding to DnaK triggers the release of the substrate protein, thus completing the reaction cycle. Several rounds of ATP-dependent interactions between DnaJ, DnaK and GrpE are required for fully efficient folding. Also involved, together with DnaK and GrpE, in the DNA replication of plasmids through activation of initiation proteins. The chain is Chaperone protein DnaJ from Campylobacter jejuni subsp. jejuni serotype O:6 (strain 81116 / NCTC 11828).